Consider the following 390-residue polypeptide: Probable tRNA sulfurtransferase (390 aa).

A THUMP domain is found at 60-162 (KQIIDDLKEV…YDCAIVYGHK (103 aa)). ATP-binding positions include 180 to 181 (LL), 205 to 206 (TF), R264, G286, and Q295.

This sequence belongs to the ThiI family.

It localises to the cytoplasm. The enzyme catalyses [ThiI sulfur-carrier protein]-S-sulfanyl-L-cysteine + a uridine in tRNA + 2 reduced [2Fe-2S]-[ferredoxin] + ATP + H(+) = [ThiI sulfur-carrier protein]-L-cysteine + a 4-thiouridine in tRNA + 2 oxidized [2Fe-2S]-[ferredoxin] + AMP + diphosphate. The catalysed reaction is [ThiS sulfur-carrier protein]-C-terminal Gly-Gly-AMP + S-sulfanyl-L-cysteinyl-[cysteine desulfurase] + AH2 = [ThiS sulfur-carrier protein]-C-terminal-Gly-aminoethanethioate + L-cysteinyl-[cysteine desulfurase] + A + AMP + 2 H(+). It functions in the pathway cofactor biosynthesis; thiamine diphosphate biosynthesis. Its function is as follows. Catalyzes the ATP-dependent transfer of a sulfur to tRNA to produce 4-thiouridine in position 8 of tRNAs, which functions as a near-UV photosensor. Also catalyzes the transfer of sulfur to the sulfur carrier protein ThiS, forming ThiS-thiocarboxylate. This is a step in the synthesis of thiazole, in the thiamine biosynthesis pathway. The sulfur is donated as persulfide by IscS. This Ureaplasma parvum serovar 3 (strain ATCC 27815 / 27 / NCTC 11736) protein is Probable tRNA sulfurtransferase.